A 482-amino-acid chain; its full sequence is MANLFKQSRAKQKNKTTPSQTQTSTKGSARANAQVAGLRFKKSKQSKEHNTAQDANNNAITIQELDWMGQGVARGATMYFVEGALPGETCDIEVVSSKKKVVSAKTISIQGPSELRQPPFCPVFEACGGCQLQHIDADAALAYRDNALKIMMERQLSIGSGVWQAPLVGPRPQYRRKARLAIDARNPDNIKLGFREANSNKVVNLDTCPILVNPLSTAIGPLRNALEGYDSARHIGHISLIAGDNRAQVVIKHTKALEDALIETVDAFAKALGLDVVLENKQGRLRSVGEAQGLIMHTVDGCSISPSANDFIQINKVVNEKMINQALVWLDPRPNERIADWFSGLGNFTLPIAKKGALVQAIEGVAEMVLRAKDNAQQQGIENVEWLHLDLANKANVEASLQQGFDKVLLDPSREGALTVCHALVKALPKTIVYVSCNPSTFSRDAKVLINGGYEMEKAGVAEMFPFTHHMEMMALFTQRQQ.

Residues 1 to 33 (MANLFKQSRAKQKNKTTPSQTQTSTKGSARANA) are disordered. Positions 15 to 28 (KTTPSQTQTSTKGS) are enriched in low complexity. The TRAM domain maps to 51–108 (TAQDANNNAITIQELDWMGQGVARGATMYFVEGALPGETCDIEVVSSKKKVVSAKTIS). [4Fe-4S] cluster is bound by residues cysteine 121, cysteine 127, cysteine 130, and cysteine 208. The S-adenosyl-L-methionine site is built by glutamine 313, phenylalanine 342, asparagine 347, glutamate 363, aspartate 390, and aspartate 411. Cysteine 437 functions as the Nucleophile in the catalytic mechanism.

It belongs to the class I-like SAM-binding methyltransferase superfamily. RNA M5U methyltransferase family. RlmD subfamily.

The enzyme catalyses uridine(1939) in 23S rRNA + S-adenosyl-L-methionine = 5-methyluridine(1939) in 23S rRNA + S-adenosyl-L-homocysteine + H(+). Its function is as follows. Catalyzes the formation of 5-methyl-uridine at position 1939 (m5U1939) in 23S rRNA. This is 23S rRNA (uracil(1939)-C(5))-methyltransferase RlmD from Alteromonas mediterranea (strain DSM 17117 / CIP 110805 / LMG 28347 / Deep ecotype).